Here is a 570-residue protein sequence, read N- to C-terminus: Sorting nexin-41 (570 aa).

2 disordered regions span residues 1-31 and 81-115; these read MSDF…PSAS and FDDG…TTAS. Over residues 84-101 the composition is skewed to polar residues; that stretch reads GSNSFSATPTASITNQND. One can recognise a PX domain in the interval 98-236; that stretch reads NQNDTAHEAT…RFLDPHASWS (139 aa). Residues Arg153, Ser155, Lys179, and Arg202 each coordinate a 1,2-diacyl-sn-glycero-3-phospho-(1D-myo-inositol-3-phosphate). The disordered stretch occupies residues 429 to 498; it reads DSQRINDALG…ASRRQGIGKT (70 aa). Positions 440–454 are enriched in polar residues; it reads TRSNNGPSTTNSGEQ. Positions 455-464 are enriched in low complexity; that stretch reads PSASPAPKKS.

It belongs to the sorting nexin family.

The protein resides in the endosome membrane. It is found in the endomembrane system. Functionally, may be required for cytoplasm to vacuole transport (Cvt) and pexophagy. The polypeptide is Sorting nexin-41 (SNX41) (Yarrowia lipolytica (strain CLIB 122 / E 150) (Yeast)).